A 250-amino-acid chain; its full sequence is Global transcriptional regulator CodY (250 aa).

Residues 1-147 (MSTLLEKTRK…GATVVGLEIL (147 aa)) are GAF domain. Residues 195 to 214 (ASKIADKVGITRSVIVNALR) constitute a DNA-binding region (H-T-H motif).

This sequence belongs to the CodY family.

It is found in the cytoplasm. Functionally, DNA-binding global transcriptional regulator which is involved in the adaptive response to starvation and acts by directly or indirectly controlling the expression of numerous genes in response to nutrient availability. During rapid exponential growth, CodY is highly active and represses genes whose products allow adaptation to nutrient depletion. This Thermoanaerobacter sp. (strain X514) protein is Global transcriptional regulator CodY.